The sequence spans 498 residues: ATP synthase subunit beta, chloroplastic (498 aa).

Residue 172-179 participates in ATP binding; sequence GGAGVGKT.

It belongs to the ATPase alpha/beta chains family. F-type ATPases have 2 components, CF(1) - the catalytic core - and CF(0) - the membrane proton channel. CF(1) has five subunits: alpha(3), beta(3), gamma(1), delta(1), epsilon(1). CF(0) has four main subunits: a(1), b(1), b'(1) and c(9-12).

It is found in the plastid. The protein localises to the chloroplast thylakoid membrane. The catalysed reaction is ATP + H2O + 4 H(+)(in) = ADP + phosphate + 5 H(+)(out). In terms of biological role, produces ATP from ADP in the presence of a proton gradient across the membrane. The catalytic sites are hosted primarily by the beta subunits. The protein is ATP synthase subunit beta, chloroplastic of Eucalyptus globulus subsp. globulus (Tasmanian blue gum).